Here is a 441-residue protein sequence, read N- to C-terminus: uncharacterized protein (441 aa).

Belongs to the outer membrane factor (OMF) (TC 1.B.17) family.

This is an uncharacterized protein from Haemophilus influenzae (strain ATCC 51907 / DSM 11121 / KW20 / Rd).